We begin with the raw amino-acid sequence, 252 residues long: Putative zinc finger CCCH domain-containing protein 58 (252 aa).

The segment at 35–62 (NHKSVLCMKWREGRCHNGVACRYAHGEE) adopts a C3H1-type zinc-finger fold. Disordered stretches follow at residues 71–95 (RVGGGGTSMHARSSPPRDGASSGST), 109–180 (RHGR…SAAD), and 215–252 (TATSEPSATSDDDAITTTTSSSTTDADELDAAVAAPPK). 2 stretches are compositionally biased toward low complexity: residues 133–149 (SARSTAPTPPRAHTTPP) and 229–238 (ITTTTSSSTT).

The chain is Putative zinc finger CCCH domain-containing protein 58 from Oryza sativa subsp. japonica (Rice).